The primary structure comprises 603 residues: Geraniol synthase, chloroplastic (603 aa).

A chloroplast-targeting transit peptide spans 1–35 (MSSISQKVVIGLNKAAANNNLQNLDRRGFKTRCVS). (2E)-geranyl diphosphate is bound by residues arginine 319, aspartate 356, aspartate 360, arginine 497, and aspartate 500. Residues aspartate 356 and aspartate 360 each coordinate Mg(2+). Positions 356 to 360 (DDVYD) match the DDXXD motif motif. The Mg(2+) site is built by aspartate 500, threonine 504, and glutamate 508.

It belongs to the terpene synthase family. Tpsb subfamily. In terms of assembly, monomer. It depends on Mg(2+) as a cofactor. Mn(2+) is required as a cofactor.

Its subcellular location is the plastid. It localises to the chloroplast. The enzyme catalyses (2E)-geranyl diphosphate + H2O = (2E)-geraniol + diphosphate. It participates in secondary metabolite biosynthesis; terpenoid biosynthesis. Functionally, monoterpene synthase (mono-TPS) involved in the biosynthesis of monoterpenes natural products. Catalyzes the conversion of (2E)-geranyl diphosphate (GPP) into geraniol. The sequence is that of Geraniol synthase, chloroplastic from Perilla frutescens var. hirtella (Perilla citriodora).